A 45-amino-acid polypeptide reads, in one-letter code: Photosystem II reaction center protein K (45 aa).

Positions 1-8 (MNSALFLA) are excised as a propeptide. The helical transmembrane segment at 23-43 (ILPVIPVFFLLLAFVWQAAIG) threads the bilayer.

The protein belongs to the PsbK family. As to quaternary structure, PSII is composed of 1 copy each of membrane proteins PsbA, PsbB, PsbC, PsbD, PsbE, PsbF, PsbH, PsbI, PsbJ, PsbK, PsbL, PsbM, PsbT, PsbX, PsbY, PsbZ, Psb30/Ycf12, at least 3 peripheral proteins of the oxygen-evolving complex and a large number of cofactors. It forms dimeric complexes.

Its subcellular location is the plastid. It is found in the chloroplast thylakoid membrane. In terms of biological role, one of the components of the core complex of photosystem II (PSII). PSII is a light-driven water:plastoquinone oxidoreductase that uses light energy to abstract electrons from H(2)O, generating O(2) and a proton gradient subsequently used for ATP formation. It consists of a core antenna complex that captures photons, and an electron transfer chain that converts photonic excitation into a charge separation. In Porphyra purpurea (Red seaweed), this protein is Photosystem II reaction center protein K.